Reading from the N-terminus, the 846-residue chain is Neurofilament medium polypeptide (846 aa).

The segment covering 1–10 (MSYTLDSLGN) has biased composition (polar residues). A disordered region spans residues 1–52 (MSYTLDSLGNPSAYRRVPTETRSSFSRVSGSPSSGFRSQSWSRGSPSTVSSS). Ser-2 bears the N-acetylserine mark. Residues 2-104 (SYTLDSLGNP…LSRSNEKEQL (103 aa)) form a head region. A compositionally biased stretch (low complexity) spans 22 to 45 (RSSFSRVSGSPSSGFRSQSWSRGS). Residue Ser-31 is modified to Phosphoserine. Arg-43 is modified (omega-N-methylarginine). O-linked (GlcNAc) threonine glycosylation is present at Thr-48. A Phosphoserine modification is found at Ser-98. Residues 100–411 (EKEQLQGLND…KLLEGEETRF (312 aa)) enclose the IF rod domain. The segment at 104 to 135 (LQGLNDRFAGYIEKVHYLEQQNKEIEAEIHAL) is coil 1A. Residues 136-148 (RQKQASHAQLGDA) are linker 1. Residues 149–247 (YDQEIRELRA…EEEVADLLAQ (99 aa)) form a coil 1B region. Ser-225 is modified (phosphoserine). Residues 248-264 (IQASHITVERKDYLKTD) form a linker 12 region. The tract at residues 265–286 (ISTALKEIRSQLECHSDQNMHQ) is coil 2A. Positions 287-290 (AEEW) are linker 2. Residues 291-411 (FKCRYAKLTE…KLLEGEETRF (121 aa)) form a coil 2B region. Tyr-319 carries the post-translational modification Phosphotyrosine. Phosphoserine occurs at positions 345, 417, and 429. Positions 412–845 (STFSGSITGP…HAIVKEVTQG (434 aa)) are tail. An O-linked (GlcNAc) threonine glycan is attached at Thr-431. Phosphoserine occurs at positions 467 and 483. The disordered stretch occupies residues 483-783 (SAKEEKEEAE…GEDRSDDKVV (301 aa)). A compositionally biased stretch (acidic residues) spans 489 to 499 (EEAEEKEEEPE). A compositionally biased stretch (basic and acidic residues) spans 500 to 510 (VEKSPVKSPEA). Ser-503 and Ser-507 each carry phosphoserine. Residues 511 to 533 (KEEEEGEKEEEEEGQEEEEEEDE) show a composition bias toward acidic residues. Basic and acidic residues predominate over residues 534–553 (GVKSDQAEEGGSEKEGSSEK). Residues Ser-537, Ser-545, Ser-550, and Ser-551 each carry the phosphoserine modification. Over residues 554 to 575 (DEGEQEEEGETEAEGEGEEAEA) the composition is skewed to acidic residues. A Phosphothreonine modification is found at Thr-564. The span at 576–603 (KEEKKTEGKVEEMAIKEEIKVEKPEKAK) shows a compositional bias: basic and acidic residues. A phosphoserine mark is found at Ser-604, Ser-609, Ser-643, Ser-667, Ser-687, Ser-713, Ser-721, Ser-751, and Ser-767. Composition is skewed to basic and acidic residues over residues 610-675 (PVEE…KAVE) and 687-709 (SLEK…KAEE). Basic and acidic residues-rich tracts occupy residues 718–730 (GDKS…KEDI) and 746–758 (TQEK…EEKG). Over residues 769–783 (AEEKKGEDRSDDKVV) the composition is skewed to basic and acidic residues.

This sequence belongs to the intermediate filament family. Forms heterodimers with NEFL; which can further hetero-oligomerize (in vitro). Forms heterodimers with INA (in vitro). In terms of processing, there are a number of repeats of the tripeptide K-S-P, NFM is phosphorylated on a number of the serines in this motif. It is thought that phosphorylation of NFM results in the formation of interfilament cross bridges that are important in the maintenance of axonal caliber. Post-translationally, phosphorylation seems to play a major role in the functioning of the larger neurofilament polypeptides (NF-M and NF-H), the levels of phosphorylation being altered developmentally and coincidentally with a change in the neurofilament function. Phosphorylated in the head and rod regions by the PKC kinase PKN1, leading to the inhibition of polymerization. As to expression, expressed in the dorsal root ganglion neurons (at protein level).

It is found in the cytoplasm. The protein resides in the cytoskeleton. The protein localises to the cell projection. It localises to the axon. Its function is as follows. Neurofilaments usually contain three intermediate filament proteins: NEFL, NEFM, and NEFH which are involved in the maintenance of neuronal caliber. May additionally cooperate with the neuronal intermediate filament proteins PRPH and INA to form neuronal filamentous networks. The polypeptide is Neurofilament medium polypeptide (Nefm) (Rattus norvegicus (Rat)).